A 122-amino-acid chain; its full sequence is Small ribosomal subunit protein uS13 (122 aa).

A disordered region spans residues 95-122; the sequence is GLPVRGQRTKTNARTRKGPKKTIAGKKK.

It belongs to the universal ribosomal protein uS13 family. In terms of assembly, part of the 30S ribosomal subunit. Forms a loose heterodimer with protein S19. Forms two bridges to the 50S subunit in the 70S ribosome.

Its function is as follows. Located at the top of the head of the 30S subunit, it contacts several helices of the 16S rRNA. In the 70S ribosome it contacts the 23S rRNA (bridge B1a) and protein L5 of the 50S subunit (bridge B1b), connecting the 2 subunits; these bridges are implicated in subunit movement. Contacts the tRNAs in the A and P-sites. This is Small ribosomal subunit protein uS13 from Corynebacterium aurimucosum (strain ATCC 700975 / DSM 44827 / CIP 107346 / CN-1) (Corynebacterium nigricans).